The chain runs to 433 residues: Serine/threonine-protein kinase DCLK1 (433 aa).

The disordered stretch occupies residues 1–74 (MLELIEVNGT…GEEESDEGFQ (74 aa)). Phosphoserine occurs at positions 23, 25, 27, 30, 40, 45, 46, 48, 57, and 69. The segment covering 40-57 (SQHGGSSTSLSSTKVCSS) has biased composition (low complexity). Over residues 59–71 (DENDGPGEEESDE) the composition is skewed to acidic residues. A Protein kinase domain is found at 83-340 (YKVGRTIGDG…AVQVLEHPWV (258 aa)). ATP contacts are provided by residues 89–97 (IGDGNFAVV) and Lys-112. Catalysis depends on Asp-204, which acts as the Proton acceptor. Tyr-213 carries the phosphotyrosine modification. The span at 388–400 (QVFRRRRNQDVRG) shows a compositional bias: basic and acidic residues. The tract at residues 388 to 433 (QVFRRRRNQDVRGRYKAQPAPPELNSESEDYSPSSSETVRSPNSPF) is disordered. Ser-419, Ser-428, and Ser-431 each carry phosphoserine.

It belongs to the protein kinase superfamily. CAMK Ser/Thr protein kinase family. CaMK subfamily.

The enzyme catalyses L-seryl-[protein] + ATP = O-phospho-L-seryl-[protein] + ADP + H(+). The catalysed reaction is L-threonyl-[protein] + ATP = O-phospho-L-threonyl-[protein] + ADP + H(+). In terms of biological role, probable kinase that may be involved in a calcium-signaling pathway controlling neuronal migration in the developing brain. May also participate in functions of the mature nervous system. The polypeptide is Serine/threonine-protein kinase DCLK1 (Dclk1) (Rattus norvegicus (Rat)).